We begin with the raw amino-acid sequence, 492 residues long: Malonate-semialdehyde dehydrogenase (492 aa).

NAD(+) contacts are provided by Phe156, Lys180, Glu183, Lys184, Ser233, and Thr255. The active-site Nucleophile is the Cys288. Residue Glu387 participates in NAD(+) binding.

The protein belongs to the aldehyde dehydrogenase family. IolA subfamily. Homotetramer.

It catalyses the reaction 3-oxopropanoate + NAD(+) + CoA + H2O = hydrogencarbonate + acetyl-CoA + NADH + H(+). It carries out the reaction 2-methyl-3-oxopropanoate + NAD(+) + CoA + H2O = propanoyl-CoA + hydrogencarbonate + NADH + H(+). It functions in the pathway polyol metabolism; myo-inositol degradation into acetyl-CoA; acetyl-CoA from myo-inositol: step 7/7. In terms of biological role, catalyzes the oxidation of malonate semialdehyde (MSA) and methylmalonate semialdehyde (MMSA) into acetyl-CoA and propanoyl-CoA, respectively. Is involved in a myo-inositol catabolic pathway. Bicarbonate, and not CO2, is the end-product of the enzymatic reaction. This Lacticaseibacillus casei (Lactobacillus casei) protein is Malonate-semialdehyde dehydrogenase.